A 75-amino-acid chain; its full sequence is Large ribosomal subunit protein bL31 (75 aa).

This sequence belongs to the bacterial ribosomal protein bL31 family. Type A subfamily. In terms of assembly, part of the 50S ribosomal subunit.

Its function is as follows. Binds the 23S rRNA. In Chlorobium luteolum (strain DSM 273 / BCRC 81028 / 2530) (Pelodictyon luteolum), this protein is Large ribosomal subunit protein bL31.